The chain runs to 331 residues: Geranylgeranyl transferase type-2 subunit beta (331 aa).

The residue at position 2 (G2) is an N-acetylglycine. At T3 the chain carries Phosphothreonine. PFTB repeat units follow at residues 20–61 (LEKH…DLMG), 68–109 (REEI…TLYD), 116–157 (VNKV…ALLG), 164–205 (VEKA…AITS), 212–253 (SDLL…KIIG), and 260–302 (REKL…SLLG). 190-192 (HAG) lines the geranylgeranyl diphosphate pocket. The Zn(2+) site is built by D238 and C240. Position 241-244 (241-244 (YSWW)) interacts with geranylgeranyl diphosphate. H290 is a Zn(2+) binding site.

Belongs to the protein prenyltransferase subunit beta family. As to quaternary structure, heterotrimer composed of RABGGTA, RABGGTB and CHM; within this trimer, RABGGTA and RABGGTB form the catalytic component B, while CHM (component A) mediates peptide substrate binding. The Rab GGTase dimer (RGGT) interacts with CHM (component A) prior to Rab protein binding; the association is stabilized by geranylgeranyl pyrophosphate (GGpp). The CHM:RGGT:Rab complex is destabilized by GGpp. Interaction of RABGGTB with prenylated PTP4A2 precludes its association with RABGGTA and inhibits enzyme activity. Interacts with CHODL. Interacts with non-phosphorylated form of RAB8A; phosphorylation of RAB8A at 'Thr-72' disrupts this interaction. The cofactor is Zn(2+).

The enzyme catalyses geranylgeranyl diphosphate + L-cysteinyl-[protein] = S-geranylgeranyl-L-cysteinyl-[protein] + diphosphate. With respect to regulation, the enzymatic reaction requires the aid of a Rab escort protein (also called component A). Catalyzes the transfer of a geranylgeranyl moiety from geranylgeranyl diphosphate to both cysteines of Rab proteins with the C-terminal sequence -XXCC, -XCXC and -CCXX, such as RAB1A, RAB3A, RAB5A and RAB7A. The sequence is that of Geranylgeranyl transferase type-2 subunit beta (RABGGTB) from Homo sapiens (Human).